Here is a 265-residue protein sequence, read N- to C-terminus: Neuronal membrane glycoprotein M6-b (265 aa).

The chain crosses the membrane as a helical span at residues 31–51 (GGVPYASLVATILCFSGVALF). Residue Asn-73 is glycosylated (N-linked (GlcNAc...) asparagine). 2 helical membrane passes run 90-110 (VIYG…AEGF) and 136-156 (FVFL…FSAV). Asn-177 carries an N-linked (GlcNAc...) asparagine glycan. A helical membrane pass occupies residues 224 to 244 (LFIVACAGAGATVIALLIYMM). The residue at position 257 (Ser-257) is a Phosphoserine.

The protein belongs to the myelin proteolipid protein family. Interacts with SERT.

Its subcellular location is the membrane. It localises to the cell membrane. Functionally, may be involved in neural development. Involved in regulation of osteoblast function and bone formation. Involved in matrix vesicle release by osteoblasts; this function seems to involve maintenance of the actin cytoskeleton. May be involved in cellular trafficking of SERT and thereby in regulation of serotonin uptake. This chain is Neuronal membrane glycoprotein M6-b (GPM6B), found in Pongo abelii (Sumatran orangutan).